A 281-amino-acid chain; its full sequence is ATP synthase gamma chain (281 aa).

Belongs to the ATPase gamma chain family. F-type ATPases have 2 components, CF(1) - the catalytic core - and CF(0) - the membrane proton channel. CF(1) has five subunits: alpha(3), beta(3), gamma(1), delta(1), epsilon(1). CF(0) has three main subunits: a, b and c.

The protein localises to the cell membrane. Functionally, produces ATP from ADP in the presence of a proton gradient across the membrane. The gamma chain is believed to be important in regulating ATPase activity and the flow of protons through the CF(0) complex. The sequence is that of ATP synthase gamma chain from Mesoplasma florum (strain ATCC 33453 / NBRC 100688 / NCTC 11704 / L1) (Acholeplasma florum).